The chain runs to 236 residues: Phosphoribosylaminoimidazole-succinocarboxamide synthase (236 aa).

It belongs to the SAICAR synthetase family.

The enzyme catalyses 5-amino-1-(5-phospho-D-ribosyl)imidazole-4-carboxylate + L-aspartate + ATP = (2S)-2-[5-amino-1-(5-phospho-beta-D-ribosyl)imidazole-4-carboxamido]succinate + ADP + phosphate + 2 H(+). Its pathway is purine metabolism; IMP biosynthesis via de novo pathway; 5-amino-1-(5-phospho-D-ribosyl)imidazole-4-carboxamide from 5-amino-1-(5-phospho-D-ribosyl)imidazole-4-carboxylate: step 1/2. The protein is Phosphoribosylaminoimidazole-succinocarboxamide synthase of Akkermansia muciniphila (strain ATCC BAA-835 / DSM 22959 / JCM 33894 / BCRC 81048 / CCUG 64013 / CIP 107961 / Muc).